Here is a 42-residue protein sequence, read N- to C-terminus: Photosystem I reaction center subunit IX (42 aa).

A helical transmembrane segment spans residues 7–27; that stretch reads YLSVAPVLSTLWFGALAGLLI.

This sequence belongs to the PsaJ family.

It is found in the plastid. The protein localises to the chloroplast thylakoid membrane. In terms of biological role, may help in the organization of the PsaE and PsaF subunits. The protein is Photosystem I reaction center subunit IX of Platanus occidentalis (Sycamore).